We begin with the raw amino-acid sequence, 90 residues long: Putative regulatory protein Cbei_1140 (90 aa).

The protein belongs to the RemA family.

This Clostridium beijerinckii (strain ATCC 51743 / NCIMB 8052) (Clostridium acetobutylicum) protein is Putative regulatory protein Cbei_1140.